The following is a 564-amino-acid chain: Formate--tetrahydrofolate ligase (564 aa).

69–76 lines the ATP pocket; that stretch reads TPAGEGKS.

This sequence belongs to the formate--tetrahydrofolate ligase family.

It carries out the reaction (6S)-5,6,7,8-tetrahydrofolate + formate + ATP = (6R)-10-formyltetrahydrofolate + ADP + phosphate. Its pathway is one-carbon metabolism; tetrahydrofolate interconversion. The sequence is that of Formate--tetrahydrofolate ligase from Renibacterium salmoninarum (strain ATCC 33209 / DSM 20767 / JCM 11484 / NBRC 15589 / NCIMB 2235).